A 521-amino-acid chain; its full sequence is Adenosylhomocysteinase-like 1 (521 aa).

Residues 1-92 (MNNLADTVVV…EKVQKNSKGS (92 aa)) are disordered. Residues 54 to 73 (RSLSASSTDSFSSASYTGSS) are compositionally biased toward low complexity. Positions 220 and 245 each coordinate substrate. 246–248 (SVT) lines the NAD(+) pocket. Substrate contacts are provided by Lys275 and Asp279. NAD(+)-binding positions include 311–316 (GDVGKG), Glu332, 388–390 (MGH), Asn435, Lys515, 515–519 (KPNYY), and Tyr519.

This sequence belongs to the adenosylhomocysteinase family. Interacts with Ahcy; the interaction may negatively regulate Ahcy catalytic activity. NAD(+) is required as a cofactor.

In terms of biological role, might play a role in the regulation of methionine metabolism possibly by binding and inactivating Ahcy. The polypeptide is Adenosylhomocysteinase-like 1 (Drosophila melanogaster (Fruit fly)).